A 654-amino-acid polypeptide reads, in one-letter code: MKKQQSSNESFDVIVIGGGHAGCEAAITTAKLGFSTALFTINLDRIAWQPCNPAVGGPAKSQLVHEVDALGGIIGKLADETAIQKRILNASRGPAVWALRAQTDKREYSKRMIEILQNTDNLSLKEAMITELLIKEVETFTKNSKNTTKQIKGVKTFFGTCYSAKSIIITAGTFLEGRIWIGNKSMSAGRSGEQAAQGLTESLHSLGIKTERLKTGTPARVDKKSISFDALDIQPSTASDKYFSFDPKIKNDMPQICCHITRTTQKTHELIRNNLHLTPIYGGFIDSKGPRYCPSIEDKIVKFADKNSHQIFLEPEGINTPEIYVQGFSTGLPENIQLELLRTLPGLNKCKMLRPAYAVEYEYIPATQLKLSLETIEIDNLFSAGQINGTTGYEEAAAQGLVAGINATRKLNMKDPIIFSRESSYIGTMINDLITRDLKEPYRVLTSRSEYRLTLRGDNADRRLTPLGFEIGLIDERRWFAHKEKMKLLKEENSRLENTRLKCTDEIARNIELESGSKIKGSTTLKDLLKRPNVHYSDFIKYDLANKSLPIAVMEGVEIDIKYEGYLKRQQNNIDQINRQSLKSLPIEINYDLIDTLSLEARENLNKIKPTNFGDASKIPGVSKADLTALLVWLKIKEIKKEKTNSFVEKKLSS.

FAD is bound at residue 17–22; that stretch reads GGGHAG. NAD(+) is bound at residue 289–303; sequence GPRYCPSIEDKIVKF.

It belongs to the MnmG family. Homodimer. Heterotetramer of two MnmE and two MnmG subunits. FAD serves as cofactor.

Its subcellular location is the cytoplasm. In terms of biological role, NAD-binding protein involved in the addition of a carboxymethylaminomethyl (cmnm) group at the wobble position (U34) of certain tRNAs, forming tRNA-cmnm(5)s(2)U34. In Prochlorococcus marinus (strain MIT 9515), this protein is tRNA uridine 5-carboxymethylaminomethyl modification enzyme MnmG.